The following is a 209-amino-acid chain: Large ribosomal subunit protein uL4 (209 aa).

The interval 46-72 (GTSSTKTRSEVRGSSKKPWKQKGTGRA) is disordered. Basic residues predominate over residues 59–72 (SSKKPWKQKGTGRA).

This sequence belongs to the universal ribosomal protein uL4 family. In terms of assembly, part of the 50S ribosomal subunit.

Functionally, one of the primary rRNA binding proteins, this protein initially binds near the 5'-end of the 23S rRNA. It is important during the early stages of 50S assembly. It makes multiple contacts with different domains of the 23S rRNA in the assembled 50S subunit and ribosome. Forms part of the polypeptide exit tunnel. The chain is Large ribosomal subunit protein uL4 from Borreliella burgdorferi (strain ATCC 35210 / DSM 4680 / CIP 102532 / B31) (Borrelia burgdorferi).